A 117-amino-acid chain; its full sequence is Conotoxin vil14.2 (117 aa).

Residues 1–22 form the signal peptide; it reads MGFRVLVLVVMATTFALPFTFF. The propeptide occupies 23–90; the sequence is EEPGRSPFRP…FAELSVGQRR (68 aa). Residues 53 to 77 are disordered; it reads RADGQPPDMRQPEMRRPEMRRPEVR. Basic and acidic residues predominate over residues 62 to 77; the sequence is RQPEMRRPEMRRPEVR. 2 disulfide bridges follow: cysteine 96-cysteine 116 and cysteine 100-cysteine 112.

This sequence belongs to the conotoxin R superfamily. Expressed by the venom duct.

It localises to the secreted. The polypeptide is Conotoxin vil14.2 (Conus villepinii (Villepin's cone)).